Consider the following 103-residue polypeptide: N(4)-acetylcytidine amidohydrolase (103 aa).

Positions 6-101 (ITFSQRFQDD…QTQFYVIEFK (96 aa)) constitute an ASCH domain. Residue Lys21 is the Proton acceptor of the active site. The active-site Nucleophile is Thr24. Glu74 (proton donor) is an active-site residue.

This sequence belongs to the N(4)-acetylcytidine amidohydrolase family.

It carries out the reaction N(4)-acetylcytidine + H2O = cytidine + acetate + H(+). It catalyses the reaction N(4)-acetyl-2'-deoxycytidine + H2O = 2'-deoxycytidine + acetate + H(+). The enzyme catalyses N(4)-acetylcytosine + H2O = cytosine + acetate + H(+). In terms of biological role, catalyzes the hydrolysis of N(4)-acetylcytidine (ac4C). In Shigella boydii serotype 4 (strain Sb227), this protein is N(4)-acetylcytidine amidohydrolase (yqfB).